We begin with the raw amino-acid sequence, 183 residues long: Translation initiation factor IF-3 (183 aa).

It belongs to the IF-3 family. In terms of assembly, monomer.

The protein localises to the cytoplasm. Its function is as follows. IF-3 binds to the 30S ribosomal subunit and shifts the equilibrium between 70S ribosomes and their 50S and 30S subunits in favor of the free subunits, thus enhancing the availability of 30S subunits on which protein synthesis initiation begins. This Pseudomonas putida (strain ATCC 700007 / DSM 6899 / JCM 31910 / BCRC 17059 / LMG 24140 / F1) protein is Translation initiation factor IF-3.